Here is a 501-residue protein sequence, read N- to C-terminus: ATP synthase subunit alpha (501 aa).

169 to 176 (GDRQTGKT) contacts ATP.

Belongs to the ATPase alpha/beta chains family. As to quaternary structure, F-type ATPases have 2 components, CF(1) - the catalytic core - and CF(0) - the membrane proton channel. CF(1) has five subunits: alpha(3), beta(3), gamma(1), delta(1), epsilon(1). CF(0) has three main subunits: a(1), b(2) and c(9-12). The alpha and beta chains form an alternating ring which encloses part of the gamma chain. CF(1) is attached to CF(0) by a central stalk formed by the gamma and epsilon chains, while a peripheral stalk is formed by the delta and b chains.

The protein localises to the cell membrane. It catalyses the reaction ATP + H2O + 4 H(+)(in) = ADP + phosphate + 5 H(+)(out). Its function is as follows. Produces ATP from ADP in the presence of a proton gradient across the membrane. The alpha chain is a regulatory subunit. The polypeptide is ATP synthase subunit alpha (Streptococcus equi subsp. equi (strain 4047)).